Reading from the N-terminus, the 104-residue chain is L-rhamnose mutarotase (104 aa).

Y18 is a binding site for substrate. The active-site Proton donor is the H22. Substrate contacts are provided by residues Y41 and 76 to 77 (WW).

It belongs to the rhamnose mutarotase family. In terms of assembly, homodimer.

The protein localises to the cytoplasm. The catalysed reaction is alpha-L-rhamnose = beta-L-rhamnose. The protein operates within carbohydrate metabolism; L-rhamnose metabolism. In terms of biological role, involved in the anomeric conversion of L-rhamnose. The chain is L-rhamnose mutarotase from Sinorhizobium fredii (strain NBRC 101917 / NGR234).